The following is a 58-amino-acid chain: Parvalbumin beta 3 (58 aa).

At alanine 1 the chain carries N-acetylalanine. The EF-hand domain occupies 24–58 (FNYKTFFKFFAIIDQDHSGFIEEEELKALSDAETK). Residues aspartate 37, aspartate 39, serine 41, phenylalanine 43, glutamate 45, and glutamate 48 each contribute to the Ca(2+) site.

The protein belongs to the parvalbumin family.

In muscle, parvalbumin is thought to be involved in relaxation after contraction. It binds two calcium ions. The chain is Parvalbumin beta 3 from Merluccius senegalensis (Senegalese hake).